The sequence spans 382 residues: Diphosphomevalonate decarboxylase ERG19 (382 aa).

(R)-5-diphosphomevalonate is bound by residues 22-25 (YWGK), arginine 78, 157-162 (SGSACR), and threonine 213.

Belongs to the diphosphomevalonate decarboxylase family. In terms of assembly, homodimer.

It carries out the reaction (R)-5-diphosphomevalonate + ATP = isopentenyl diphosphate + ADP + phosphate + CO2. It participates in isoprenoid biosynthesis; isopentenyl diphosphate biosynthesis via mevalonate pathway; isopentenyl diphosphate from (R)-mevalonate: step 3/3. Diphosphomevalonate decarboxylase; part of the second module of ergosterol biosynthesis pathway that includes the middle steps of the pathway. MVD1 converts diphosphomevalonate into isopentenyl diphosphate. The second module is carried out in the vacuole and involves the formation of farnesyl diphosphate, which is also an important intermediate in the biosynthesis of ubiquinone, dolichol, heme and prenylated proteins. Activity by the mevalonate kinase ERG12 (FG05912) first converts mevalonate into 5-phosphomevalonate. 5-phosphomevalonate is then further converted to 5-diphosphomevalonate by the phosphomevalonate kinase ERG8 (FG09764). The diphosphomevalonate decarboxylase ERG19 (FG10424) then produces isopentenyl diphosphate. The isopentenyl-diphosphate delta-isomerase IDI1 (FG09722) then catalyzes the 1,3-allylic rearrangement of the homoallylic substrate isopentenyl (IPP) to its highly electrophilic allylic isomer, dimethylallyl diphosphate (DMAPP). Finally the farnesyl diphosphate synthase ERG20 (FG06784) catalyzes the sequential condensation of isopentenyl pyrophosphate with dimethylallyl pyrophosphate, and then with the resultant geranylpyrophosphate to the ultimate product farnesyl pyrophosphate. This chain is Diphosphomevalonate decarboxylase ERG19, found in Gibberella zeae (strain ATCC MYA-4620 / CBS 123657 / FGSC 9075 / NRRL 31084 / PH-1) (Wheat head blight fungus).